The primary structure comprises 518 residues: Bifunctional purine biosynthesis protein PurH (518 aa).

The MGS-like domain occupies 1 to 144 (MSKRALISVS…KNHAAVTVVC (144 aa)).

It belongs to the PurH family.

It carries out the reaction (6R)-10-formyltetrahydrofolate + 5-amino-1-(5-phospho-beta-D-ribosyl)imidazole-4-carboxamide = 5-formamido-1-(5-phospho-D-ribosyl)imidazole-4-carboxamide + (6S)-5,6,7,8-tetrahydrofolate. The catalysed reaction is IMP + H2O = 5-formamido-1-(5-phospho-D-ribosyl)imidazole-4-carboxamide. Its pathway is purine metabolism; IMP biosynthesis via de novo pathway; 5-formamido-1-(5-phospho-D-ribosyl)imidazole-4-carboxamide from 5-amino-1-(5-phospho-D-ribosyl)imidazole-4-carboxamide (10-formyl THF route): step 1/1. It functions in the pathway purine metabolism; IMP biosynthesis via de novo pathway; IMP from 5-formamido-1-(5-phospho-D-ribosyl)imidazole-4-carboxamide: step 1/1. This Lactococcus lactis subsp. cremoris (strain MG1363) protein is Bifunctional purine biosynthesis protein PurH.